The following is a 227-amino-acid chain: Protein rapunzel (227 aa).

A helical membrane pass occupies residues 179 to 196 (LAYLFCIGFIALMGYYGI).

Its subcellular location is the membrane. The protein is Protein rapunzel of Danio rerio (Zebrafish).